A 141-amino-acid chain; its full sequence is Large ribosomal subunit protein uL11 (141 aa).

This sequence belongs to the universal ribosomal protein uL11 family. In terms of assembly, part of the ribosomal stalk of the 50S ribosomal subunit. Interacts with L10 and the large rRNA to form the base of the stalk. L10 forms an elongated spine to which L12 dimers bind in a sequential fashion forming a multimeric L10(L12)X complex. One or more lysine residues are methylated.

In terms of biological role, forms part of the ribosomal stalk which helps the ribosome interact with GTP-bound translation factors. The polypeptide is Large ribosomal subunit protein uL11 (Dinoroseobacter shibae (strain DSM 16493 / NCIMB 14021 / DFL 12)).